Here is a 174-residue protein sequence, read N- to C-terminus: Small ribosomal subunit protein uS7c (174 aa).

This sequence belongs to the universal ribosomal protein uS7 family. As to quaternary structure, part of the 30S ribosomal subunit.

It localises to the plastid. It is found in the chloroplast. Its function is as follows. One of the primary rRNA binding proteins, it binds directly to 16S rRNA where it nucleates assembly of the head domain of the 30S subunit. The chain is Small ribosomal subunit protein uS7c (rps7) from Stigeoclonium helveticum (Green alga).